We begin with the raw amino-acid sequence, 97 residues long: Intermembrane phospholipid transport system binding protein MlaB (97 aa).

The STAS domain maps to 1–97; that stretch reads MSESLSWMQT…YNLPADVLPR (97 aa).

As to quaternary structure, the complex is composed of two ATP-binding proteins (MlaF), two transmembrane proteins (MlaE), two cytoplasmic solute-binding proteins (MlaB) and six periplasmic solute-binding proteins (MlaD).

It localises to the cytoplasm. Its function is as follows. Part of the ABC transporter complex MlaFEDB, which is involved in a phospholipid transport pathway that maintains lipid asymmetry in the outer membrane by retrograde trafficking of phospholipids from the outer membrane to the inner membrane. MlaB plays critical roles in both the assembly and activity of the complex. May act by modulating MlaF structure and stability. This chain is Intermembrane phospholipid transport system binding protein MlaB, found in Escherichia coli (strain K12).